Reading from the N-terminus, the 252-residue chain is Vacuolar iron transporter 1 (252 aa).

Residues 1 to 38 are Cytoplasmic-facing; that stretch reads MAAATDGGGLPLLADKAASHSHHHHPERHFTSGEVVRD. A helical membrane pass occupies residues 39-59; that stretch reads VIMGVSDGLTVPFALAAGLSG. Topologically, residues 60–65 are vacuolar; the sequence is ASAPSS. A helical transmembrane segment spans residues 66–86; the sequence is LVLTAGLAEVAAGAISMGLGG. Residues 87 to 170 lie on the Cytoplasmic side of the membrane; the sequence is YLAAKSEADH…PDPKRAIQSA (84 aa). Residues 92 to 167 form a cytoplasmic metal binding domain (MBD) region; the sequence is SEADHYQREM…LEKPDPKRAI (76 aa). Fe cation is bound by residues Glu-104, Glu-107, Glu-115, Glu-118, Met-151, and Glu-155. The chain crosses the membrane as a helical span at residues 171-191; sequence LTIALSYVIGGLVPLLPYMFI. At 192 to 196 the chain is on the vacuolar side; that stretch reads STAQN. A helical membrane pass occupies residues 197 to 217; the sequence is AMLTSVGVTLVALLFFGYIKG. At 218–224 the chain is on the cytoplasmic side; that stretch reads RFTGNRP. The helical transmembrane segment at 225-245 threads the bilayer; that stretch reads FLSAVQTAIIGALASAAAYGM. Topologically, residues 246-252 are vacuolar; the sequence is AKAVQTR.

This sequence belongs to the CCC1 family. Homodimer. The dimeric interaction is mediated by both the transmembrane domains (TMDs) and the cytoplasmic metal binding domain (MBD). Highly expressed in leaf blades. Expressed in leaf sheaths.

The protein localises to the vacuole membrane. The enzyme catalyses Fe(2+)(in) = Fe(2+)(out). Its function is as follows. Vacuolar iron transporter involved in the transfer of iron ions from the cytosol to the vacuole for intracellular iron storage. Vacuolar iron storage is required for seed embryo and seedling development. May be involved in the regulation of iron translocation between flag leaves and seeds. Can transport zinc ions from the cytosol to the vacuole. This chain is Vacuolar iron transporter 1, found in Oryza sativa subsp. japonica (Rice).